A 211-amino-acid polypeptide reads, in one-letter code: Small ribosomal subunit protein uS5 (211 aa).

The 64-residue stretch at 50 to 113 folds into the S5 DRBM domain; the sequence is LEDEVLDINM…DNAKINITRI (64 aa).

The protein belongs to the universal ribosomal protein uS5 family. In terms of assembly, part of the 30S ribosomal subunit. Contacts protein S4.

In terms of biological role, with S4 and S12 plays an important role in translational accuracy. In Methanococcoides burtonii (strain DSM 6242 / NBRC 107633 / OCM 468 / ACE-M), this protein is Small ribosomal subunit protein uS5.